The following is a 207-amino-acid chain: Large ribosomal subunit protein uL3c (207 aa).

Positions 128 to 148 (FTRGPMTHGSKNHRAPGSIGM) are disordered.

It belongs to the universal ribosomal protein uL3 family. Part of the 50S ribosomal subunit.

The protein localises to the plastid. The protein resides in the chloroplast. In terms of biological role, one of the primary rRNA binding proteins, it binds directly near the 3'-end of the 23S rRNA, where it nucleates assembly of the 50S subunit. The polypeptide is Large ribosomal subunit protein uL3c (rpl3) (Trieres chinensis (Marine centric diatom)).